A 245-amino-acid chain; its full sequence is Ribonuclease PH (245 aa).

Phosphate is bound by residues R87 and 125–127 (GTR).

It belongs to the RNase PH family. Homohexameric ring arranged as a trimer of dimers.

It carries out the reaction tRNA(n+1) + phosphate = tRNA(n) + a ribonucleoside 5'-diphosphate. Functionally, phosphorolytic 3'-5' exoribonuclease that plays an important role in tRNA 3'-end maturation. Removes nucleotide residues following the 3'-CCA terminus of tRNAs; can also add nucleotides to the ends of RNA molecules by using nucleoside diphosphates as substrates, but this may not be physiologically important. Probably plays a role in initiation of 16S rRNA degradation (leading to ribosome degradation) during starvation. In Streptomyces griseus subsp. griseus (strain JCM 4626 / CBS 651.72 / NBRC 13350 / KCC S-0626 / ISP 5235), this protein is Ribonuclease PH.